The primary structure comprises 429 residues: MNFSESERLQQLSNEYILGGVNSPSRSYKAVGGGAPVVMKEGHGAYLYDVDGNKFIDYLQAYGPIITGHAHPHITKAIQEQAAKGVLFGTPTELEIEFSKKLRDAIPSLEKIRFVNSGTEAVMTTIRVARAYTKRNKIIKFAGSYHGHSDLVLVAAGSGPSQLGSPDSAGVPESVAREVITVPFNDINAYKEAIEFWGDEIAAVLVEPIVGNFGMVMPQPGFLEEVNEISHNNGTLVIYDEVITAFRFHYGAAQDLLGVIPDLTAFGKIVGGGLPIGGYGGRQDIMEQVAPLGPAYQAGTMAGNPLSMKAGIALLEVLEQDGVYEKLDSLGQQLEEGLLKLIEKHNITATINRIYGSLTLYFTDEKVTHYDQVEHSDGEAFGKFFKLMLNQGINLAPSKFEAWFLTTEHTEEDIKQTLKAADYAFSQMK.

The residue at position 268 (Lys-268) is an N6-(pyridoxal phosphate)lysine.

Belongs to the class-III pyridoxal-phosphate-dependent aminotransferase family. HemL subfamily. Homodimer. Requires pyridoxal 5'-phosphate as cofactor.

Its subcellular location is the cytoplasm. It catalyses the reaction (S)-4-amino-5-oxopentanoate = 5-aminolevulinate. Its pathway is porphyrin-containing compound metabolism; protoporphyrin-IX biosynthesis; 5-aminolevulinate from L-glutamyl-tRNA(Glu): step 2/2. The protein is Glutamate-1-semialdehyde 2,1-aminomutase 2 of Staphylococcus aureus (strain USA300).